Consider the following 547-residue polypeptide: Chaperonin GroEL 2 (547 aa).

ATP-binding positions include 30–33, lysine 51, 87–91, glycine 415, 479–481, and aspartate 495; these read TLGP, DGTTT, and NAA. The interval 526–547 is disordered; the sequence is KEESAAPAGGGMGGMGGMGGMM. A compositionally biased stretch (gly residues) spans 533–547; that stretch reads AGGGMGGMGGMGGMM.

This sequence belongs to the chaperonin (HSP60) family. Forms a cylinder of 14 subunits composed of two heptameric rings stacked back-to-back. Interacts with the co-chaperonin GroES.

The protein resides in the cytoplasm. It catalyses the reaction ATP + H2O + a folded polypeptide = ADP + phosphate + an unfolded polypeptide.. In terms of biological role, together with its co-chaperonin GroES, plays an essential role in assisting protein folding. The GroEL-GroES system forms a nano-cage that allows encapsulation of the non-native substrate proteins and provides a physical environment optimized to promote and accelerate protein folding. The polypeptide is Chaperonin GroEL 2 (Anaeromyxobacter sp. (strain Fw109-5)).